Consider the following 268-residue polypeptide: MICOS complex subunit MIC27 (268 aa).

A mitochondrion-targeting transit peptide spans 1–27 (MAAIRMGKLTTMPAGLIYASVSVHAAK). The Mitochondrial intermembrane segment spans residues 28–110 (QEESKKQLVK…YVYLKNPPRD (83 aa)). The helical transmembrane segment at 111–129 (FLPKMGVITVSGLAGLVSA) threads the bilayer. At 130 to 137 (RKGSKFKK) the chain is on the mitochondrial matrix side. Residues 138–155 (ITYPLGLATLGATVCYPV) form a helical membrane-spanning segment. The Mitochondrial intermembrane portion of the chain corresponds to 156–268 (QSVIIAKVTA…EDIDMYSTRS (113 aa)). Residues 187–200 (SKEESLPKPKEKTK) are compositionally biased toward basic and acidic residues. The disordered stretch occupies residues 187–268 (SKEESLPKPK…EDIDMYSTRS (82 aa)). S204 is modified (phosphoserine). Residues 249-260 (KLMDHGQSHPED) show a composition bias toward basic and acidic residues.

The protein belongs to the apolipoprotein O/MICOS complex subunit Mic27 family. Component of the mitochondrial contact site and cristae organizing system (MICOS) complex, composed of at least MICOS10/MIC10, CHCHD3/MIC19, CHCHD6/MIC25, APOOL/MIC27, IMMT/MIC60, APOO/MIC23/MIC26 and MICOS13/MIC13. This complex was also known under the names MINOS or MitOS complex. The MICOS complex associates with mitochondrial outer membrane proteins SAMM50, MTX1 and MTX2 (together described as components of the mitochondrial outer membrane sorting assembly machinery (SAM) complex) and DNAJC11, mitochondrial inner membrane protein TMEM11 and with HSPA9. The MICOS and SAM complexes together with DNAJC11 are part of a large protein complex spanning both membranes termed the mitochondrial intermembrane space bridging (MIB) complex. Interacts with MICOS10/MIC10, IMMT/MIC60 and APOO/MIC23/MIC26.

The protein resides in the mitochondrion inner membrane. The protein localises to the mitochondrion. In terms of biological role, component of the MICOS complex, a large protein complex of the mitochondrial inner membrane that plays crucial roles in the maintenance of crista junctions, inner membrane architecture, and formation of contact sites to the outer membrane. Specifically binds to cardiolipin (in vitro) but not to the precursor lipid phosphatidylglycerol. Plays a crucial role in crista junction formation and mitochondrial function,. This is MICOS complex subunit MIC27 (APOOL) from Homo sapiens (Human).